The sequence spans 146 residues: Arginine vasopressin-induced protein 1 (146 aa).

Disordered stretches follow at residues 1–31 (MGTP…RKQA) and 80–146 (RRKR…QIRH). Residues 80–92 (RRKRPPRQNHCSR) show a composition bias toward basic residues. Residues 106–123 (QASTTDTASSEQFGNSRR) show a composition bias toward polar residues.

May be involved in MAP kinase activation, epithelial sodium channel (ENaC) down-regulation and cell cycling. The protein is Arginine vasopressin-induced protein 1 (Avpi1) of Rattus norvegicus (Rat).